We begin with the raw amino-acid sequence, 525 residues long: GMP synthase [glutamine-hydrolyzing] (525 aa).

Residues 9–207 form the Glutamine amidotransferase type-1 domain; that stretch reads RILILDFGSQ…VRDICQCEAL (199 aa). Cys-86 serves as the catalytic Nucleophile. Catalysis depends on residues His-181 and Glu-183. The GMPS ATP-PPase domain maps to 208-400; the sequence is WTPAKIIDDA…LGLPYDMLYR (193 aa). 235–241 serves as a coordination point for ATP; that stretch reads SGGVDSS.

As to quaternary structure, homodimer.

It catalyses the reaction XMP + L-glutamine + ATP + H2O = GMP + L-glutamate + AMP + diphosphate + 2 H(+). It functions in the pathway purine metabolism; GMP biosynthesis; GMP from XMP (L-Gln route): step 1/1. Catalyzes the synthesis of GMP from XMP. This chain is GMP synthase [glutamine-hydrolyzing], found in Shigella flexneri.